The primary structure comprises 141 residues: HTH-type transcriptional repressor NsrR (141 aa).

Residues 2-129 (QLTNFTDYGL…DNYTLADLVE (128 aa)) form the HTH rrf2-type domain. Residues 28 to 51 (ISEVTDVYGVSRNHMVKIINQLSR) constitute a DNA-binding region (H-T-H motif). 3 residues coordinate [2Fe-2S] cluster: C91, C96, and C102.

[2Fe-2S] cluster is required as a cofactor.

In terms of biological role, nitric oxide-sensitive repressor of genes involved in protecting the cell against nitrosative stress. May require iron for activity. The chain is HTH-type transcriptional repressor NsrR from Shigella boydii serotype 18 (strain CDC 3083-94 / BS512).